Reading from the N-terminus, the 125-residue chain is Fumarate reductase subunit D (125 aa).

Transmembrane regions (helical) follow at residues 30-50 (FAMLTPITVLVLGILVPLGVI), 62-82 (AFATSIIGALFIIGTLALPMW), and 105-125 (VACYAFAGLITALAVIFIFMI).

This sequence belongs to the FrdD family. Part of an enzyme complex containing four subunits: a flavoprotein (FrdA), an iron-sulfur protein (FrdB), and two hydrophobic anchor proteins (FrdC and FrdD).

The protein localises to the cell inner membrane. Anchors the catalytic components of the fumarate reductase complex to the cell membrane, binds quinones. This Vibrio parahaemolyticus serotype O3:K6 (strain RIMD 2210633) protein is Fumarate reductase subunit D.